The primary structure comprises 216 residues: Large ribosomal subunit protein uL1 (216 aa).

The protein belongs to the universal ribosomal protein uL1 family.

This is Large ribosomal subunit protein uL1 from Oryza sativa subsp. indica (Rice).